Reading from the N-terminus, the 23-residue chain is Basic phospholipase A2 homolog CTs-K49c (23 aa).

In terms of processing, contains 7 disulfide bonds. As to expression, expressed by the venom gland.

The protein resides in the secreted. Its function is as follows. Snake venom phospholipase A2 homolog that lacks catalytic activity. Shows myotoxic activities. Induces local edema a few hours after injection (5-10 ug) in the hind paw. The chain is Basic phospholipase A2 homolog CTs-K49c from Trimeresurus stejnegeri (Chinese green tree viper).